The chain runs to 181 residues: Lectin beta-1 and beta-2 chains (181 aa).

Mn(2+)-binding residues include E119 and D121. D121, F123, N125, and D129 together coordinate Ca(2+). Mn(2+)-binding residues include D129 and H136.

The protein belongs to the leguminous lectin family. In terms of assembly, tetramer of two alpha and two beta chains.

In Lathyrus ochrus (Cyprus-vetch), this protein is Lectin beta-1 and beta-2 chains.